Consider the following 785-residue polypeptide: Putative lipase C4A8.10 (785 aa).

Disordered regions lie at residues 29–99 and 115–140; these read HSAT…SSDF and NTNA…VGTS. The segment covering 32 to 41 has biased composition (low complexity); that stretch reads TSSTTVPPTV. Residues 47-58 show a composition bias toward basic and acidic residues; that stretch reads TKKESGSIEDRA. Over residues 63 to 86 the composition is skewed to polar residues; the sequence is MTISSGENISKQISENNSSTNPKH. 2 stretches are compositionally biased toward low complexity: residues 89–99 and 127–140; these read SESSPLLSSDF and GVSH…VGTS. The active-site Charge relay system is the Ser-390.

It belongs to the putative lipase ROG1 family.

The protein is Putative lipase C4A8.10 of Schizosaccharomyces pombe (strain 972 / ATCC 24843) (Fission yeast).